The following is a 219-amino-acid chain: Transcriptional activator protein rep2 (219 aa).

The segment at 177 to 197 (CSKCNTTFNHSTALMMHEATC) is a zinc-finger region.

Its function is as follows. Transcriptional activator which interacts with the mcb binding subunit complex formed by res2 and cdc10. Rep2 is required for the mitotic cell cycle start. The sequence is that of Transcriptional activator protein rep2 (rep2) from Schizosaccharomyces pombe (strain 972 / ATCC 24843) (Fission yeast).